The chain runs to 583 residues: MATANALSSPSVLCSSRQGKLSGGSQQKGQRVSYRKANRRFSLRANVKEIAFDQSSRAALQAGIDKLADAVGLTLGPRGRNVVLDEFGSPKVVNDGVTIARAIELPDAMENAGAALIREVASKTNDSAGDGTTTASVLAREIIKHGLLSVTSGANPVSLKRGIDKTVQALIEELEKRSRPVKGGRDIKAVATISAGNDELIGAMIADAIDKVGPDGVSPIESSSSFETTVEVEEGMEIDRGYISPQFVTNPEKLLVEFENARVLITDQKITAIKDIIPILEKTTQLRAPLLIIAEDVTGEALATLVVNKLRGVLNVVAVKAPGFGERRKAMLQDIAILTEPSTALDMGLLVENTTIDQLGIARKVTISKDSTTLIADAASKAELQARISQLKKESFETDSVYDSEKLAERIAKLSGGVAVIKVGAATETELEDRKLRIEDAKNATFAAIEEGIVPGGGATLVHLSTVIPAIKETFEDADVRLGADIVQKALVAQSLIAQNAGIEGEVVVEKIMFSEWELGYNAMTDTYENLLEAGVIDPAKVTRCALQNAASVAGMVLTTQAIVVDKPKPKAPAAAAPEGLMV.

Polar residues predominate over residues 1-14 (MATANALSSPSVLC). The interval 1–35 (MATANALSSPSVLCSSRQGKLSGGSQQKGQRVSYR) is disordered. Residues 1–45 (MATANALSSPSVLCSSRQGKLSGGSQQKGQRVSYRKANRRFSLRA) constitute a chloroplast transit peptide. Positions 15-31 (SSRQGKLSGGSQQKGQR) are enriched in low complexity. Residue S89 is modified to Phosphoserine.

The protein belongs to the chaperonin (HSP60) family. In terms of assembly, oligomer of probably six alpha and six beta subunits.

The protein localises to the plastid. It is found in the chloroplast. This protein binds RuBisCO small and large subunits and is implicated in the assembly of the enzyme oligomer. The chain is RuBisCO large subunit-binding protein subunit alpha, chloroplastic from Brassica napus (Rape).